The following is a 450-amino-acid chain: Phosphoglucosamine mutase (450 aa).

Serine 101 functions as the Phosphoserine intermediate in the catalytic mechanism. The Mg(2+) site is built by serine 101, aspartate 240, aspartate 242, and aspartate 244. A Phosphoserine modification is found at serine 101.

Belongs to the phosphohexose mutase family. Mg(2+) serves as cofactor. Post-translationally, activated by phosphorylation.

The enzyme catalyses alpha-D-glucosamine 1-phosphate = D-glucosamine 6-phosphate. In terms of biological role, catalyzes the conversion of glucosamine-6-phosphate to glucosamine-1-phosphate. This chain is Phosphoglucosamine mutase, found in Streptococcus pneumoniae (strain JJA).